A 484-amino-acid polypeptide reads, in one-letter code: 6-phosphogluconate dehydrogenase, decarboxylating (484 aa).

NADP(+) contacts are provided by residues 11 to 16 (GLAVMG), 34 to 36 (NRT), 76 to 78 (VRA), and N104. Substrate-binding positions include N104 and 130 to 132 (SGG). The active-site Proton acceptor is K185. 188–189 (HN) contributes to the substrate binding site. Catalysis depends on E192, which acts as the Proton donor. Residues Y193, K262, R289, R447, and H453 each contribute to the substrate site.

This sequence belongs to the 6-phosphogluconate dehydrogenase family. Homodimer.

It catalyses the reaction 6-phospho-D-gluconate + NADP(+) = D-ribulose 5-phosphate + CO2 + NADPH. The protein operates within carbohydrate degradation; pentose phosphate pathway; D-ribulose 5-phosphate from D-glucose 6-phosphate (oxidative stage): step 3/3. Its function is as follows. Catalyzes the oxidative decarboxylation of 6-phosphogluconate to ribulose 5-phosphate and CO(2), with concomitant reduction of NADP to NADPH. This Haemophilus ducreyi (strain 35000HP / ATCC 700724) protein is 6-phosphogluconate dehydrogenase, decarboxylating (gnd).